Here is a 1877-residue protein sequence, read N- to C-terminus: Proprotein convertase subtilisin/kexin type 5 (1877 aa).

Positions 1–34 (MDWDWGNRCSRPGRRDLLCVLALLAGCLLPVCRT) are cleaved as a signal peptide. Residues 35-116 (RVYTNHWAVK…QQVVKKRTKR (82 aa)) constitute a propeptide that is removed on maturation. At 117–1768 (DYDLSHAQST…EAEFYEHTKT (1652 aa)) the chain is on the extracellular side. Positions 136–455 (MWYMHCSDNT…FGLMDAEAMV (320 aa)) constitute a Peptidase S8 domain. Catalysis depends on charge relay system residues D173 and H214. Residues N227 and N383 are each glycosylated (N-linked (GlcNAc...) asparagine). The active-site Charge relay system is the S388. The P/Homo B domain occupies 463-603 (TVPQQHVCVE…SLVLYGTSVQ (141 aa)). The Cell attachment site motif lies at 521-523 (RGD). 22 FU repeats span residues 632–682 (EDYA…GHYH), 685–732 (KKRC…GSYE), 736–779 (KNVC…GQFF), 781–826 (GHDC…SYYL), 834–881 (YKSC…GEYI), 884–929 (QGHC…WKFE), 931–981 (KKQC…GHYP), 984–1030 (GHAC…GEFQ), 1034–1079 (YEEC…KTFG), 1081–1123 (KWEC…GFHG), 1127–1168 (LGEC…STWP), 1206–1248 (TSQN…GTWP), 1252–1299 (SGSC…GFYA), 1301–1345 (DGVC…KHVA), 1347–1390 (EGVC…SFYP), 1392–1438 (MRQC…GTYK), 1442–1487 (NDEC…VEYW), 1491–1536 (SHRC…GYHT), 1540–1585 (SQQC…GYYG), 1589–1636 (SGRC…HYYA), 1640–1685 (AQTC…GEYR), and 1691–1738 (NFNC…SHSR). The tract at residues 638–1753 (CDPECSEVGC…CDCQSSTDEC (1116 aa)) is CRM (Cys-rich motif). The N-linked (GlcNAc...) asparagine glycan is linked to N667. N-linked (GlcNAc...) asparagine glycosylation is found at N754, N804, and N854. 2 N-linked (GlcNAc...) asparagine glycosylation sites follow: N951 and N1016. N-linked (GlcNAc...) asparagine glycosylation occurs at N1220. N1317 carries an N-linked (GlcNAc...) asparagine glycan. N1523 carries an N-linked (GlcNAc...) asparagine glycan. N-linked (GlcNAc...) asparagine glycosylation is found at N1711 and N1733. A helical membrane pass occupies residues 1769 to 1789 (ALLVTSGAMLLLLLGAAAVVW). At 1790–1877 (RKSRSRPVAK…EYDDESYSYQ (88 aa)) the chain is on the cytoplasmic side. 2 AC regions span residues 1825-1844 (VIEY…IVYM) and 1856-1877 (YGLL…YSYQ).

It belongs to the peptidase S8 family. PC5A is expressed in most tissues but is most abundant in the intestine and adrenals. PC5B is expressed in the intestine, adrenals and lung but not in the brain.

It is found in the secreted. The protein resides in the endomembrane system. Functionally, serine endoprotease that processes various proproteins by cleavage at paired basic amino acids, recognizing the RXXX[KR]R consensus motif. Likely functions in the constitutive and regulated secretory pathways. Plays an essential role in pregnancy establishment by proteolytic activation of a number of important factors such as BMP2, CALD1 and alpha-integrins. May be responsible for the maturation of gastrointestinal peptides. May be involved in the cellular proliferation of adrenal cortex via the activation of growth factors. The chain is Proprotein convertase subtilisin/kexin type 5 (Pcsk5) from Mus musculus (Mouse).